Here is a 309-residue protein sequence, read N- to C-terminus: Probable 2,4-dienoyl-CoA reductase 3 [(3E)-enoyl-CoA-producing] (309 aa).

Residues Gly-32–Ile-37, Arg-57, and Asp-83 contribute to the NADP(+) site. Position 57 (Arg-57) interacts with substrate. Substrate contacts are provided by Phe-116 and Ser-124. Tyr-166 (proton acceptor) is an active-site residue. Residues Lys-181 and Pro-207–Ile-210 each bind NADP(+). Arg-218 is a binding site for substrate.

Belongs to the short-chain dehydrogenases/reductases (SDR) family. 2,4-dienoyl-CoA reductase subfamily.

It carries out the reaction a (2E,4E)-dienoyl-CoA + NADPH + H(+) = a 4,5-saturated-(3E)-enoyl-CoA + NADP(+). The catalysed reaction is a (2E,4Z)-dienoyl-CoA + NADPH + H(+) = a 4,5-saturated-(3E)-enoyl-CoA + NADP(+). Its function is as follows. Auxiliary enzyme of beta-oxidation. It participates in the metabolism of unsaturated fatty enoyl-CoA esters having double bonds in both even- and odd-numbered positions. Catalyzes the NADP-dependent reduction of 2,4-dienoyl-CoA to yield trans-3-enoyl-CoA. The sequence is that of Probable 2,4-dienoyl-CoA reductase 3 [(3E)-enoyl-CoA-producing] from Caenorhabditis elegans.